An 878-amino-acid polypeptide reads, in one-letter code: Valine--tRNA ligase (878 aa).

Residues 45–55 carry the 'HIGH' region motif; sequence PNVTGQLHMGH. A 'KMSKS' region motif is present at residues 524–528; the sequence is KMSKS. K527 is a binding site for ATP. Positions 804–871 form a coiled coil; the sequence is PLKDLIDLEK…REKEVLEQRI (68 aa).

Belongs to the class-I aminoacyl-tRNA synthetase family. ValS type 1 subfamily. Monomer.

Its subcellular location is the cytoplasm. The catalysed reaction is tRNA(Val) + L-valine + ATP = L-valyl-tRNA(Val) + AMP + diphosphate. Functionally, catalyzes the attachment of valine to tRNA(Val). As ValRS can inadvertently accommodate and process structurally similar amino acids such as threonine, to avoid such errors, it has a 'posttransfer' editing activity that hydrolyzes mischarged Thr-tRNA(Val) in a tRNA-dependent manner. The protein is Valine--tRNA ligase of Carboxydothermus hydrogenoformans (strain ATCC BAA-161 / DSM 6008 / Z-2901).